The following is a 497-amino-acid chain: MPQAPMPEFSSSVKLKYVKLGYQYLVNHFLSFLLIPIMAIVAVELLRMGPEEILNVWNSLQFDLVQVLCSSFFVIFISTVYFMSKPRTIYLVDYSCYKPPVTCRVPFATFMEHSRLILKDKPKSVEFQMRILERSGLGEETCLPPAIHYIPPTPTMDAARSEAQMVIFEAMDDLFKKTGLKPKDVDILIVNCSLFSPTPSLSAMVINKYKLRSNIKSFNLSGMGCSAGLISVDLARDLLQVHPNSNAIIVSTEIITPNYYQGNERAMLLPNCLFRMGAAAIHMSNRRSDRWRAKYKLSHLVRTHRGADDKSFYCVYEQEDKEGHVGINLSKDLMAIAGEALKANITTIGPLVLPASEQLLFLTSLIGRKIFNPKWKPYIPDFKLAFEHFCIHAGGRAVIDELQKNLQLSGEHVEASRMTLHRFGNTSSSSLWYELSYIESKGRMRRGDRVWQIAFGSGFKCNSAVWKCNRTIKTPKDGPWSDCIDRYPVFIPEVVKL.

2 consecutive transmembrane segments (helical) span residues 25 to 45 (LVNH…AVEL) and 64 to 84 (LVQV…YFMS). In terms of domain architecture, FAE spans 81-370 (YFMSKPRTIY…FLTSLIGRKI (290 aa)). Active-site residues include Cys-225, His-304, His-388, His-392, His-421, and Asn-425.

It belongs to the thiolase-like superfamily. Chalcone/stilbene synthases family. As to expression, in epidermal cells of aerial tissues and in the tapetum of anthers near maturity. Expressed in siliques, flowers and leaves.

It is found in the endoplasmic reticulum membrane. The catalysed reaction is a very-long-chain acyl-CoA + malonyl-CoA + H(+) = a very-long-chain 3-oxoacyl-CoA + CO2 + CoA. It participates in lipid metabolism; fatty acid biosynthesis. With respect to regulation, strongly inhibited by metazachlor and mefluidide. Its function is as follows. Contributes to cuticular wax and suberin biosynthesis. Involved in both decarbonylation and acyl-reduction wax synthesis pathways. Required for elongation of C24 fatty acids, an essential step of the cuticular wax production. Major condensing enzyme for stem wax and pollen coat lipid biosynthesis. The protein is 3-ketoacyl-CoA synthase 6 of Arabidopsis thaliana (Mouse-ear cress).